The following is a 400-amino-acid chain: Argininosuccinate synthase (400 aa).

Residue 9 to 17 (AYSGGLDTS) participates in ATP binding. An L-citrulline-binding site is contributed by Tyr87. Gly117 is a binding site for ATP. Thr119, Asn123, and Asp124 together coordinate L-aspartate. Position 123 (Asn123) interacts with L-citrulline. L-citrulline contacts are provided by Arg127, Ser176, Ser185, Glu261, and Tyr273.

The protein belongs to the argininosuccinate synthase family. Type 1 subfamily. As to quaternary structure, homotetramer.

The protein localises to the cytoplasm. It carries out the reaction L-citrulline + L-aspartate + ATP = 2-(N(omega)-L-arginino)succinate + AMP + diphosphate + H(+). It functions in the pathway amino-acid biosynthesis; L-arginine biosynthesis; L-arginine from L-ornithine and carbamoyl phosphate: step 2/3. The sequence is that of Argininosuccinate synthase from Chlorobium limicola (strain DSM 245 / NBRC 103803 / 6330).